Here is a 129-residue protein sequence, read N- to C-terminus: Membrane protein 0 (129 aa).

Residues 1 to 25 (MATVHYSRRPGTPPVTLTSSPSMDD) form a disordered region. Positions 44-47 (PPPY) match the PPXY motif motif. Residues 100 to 120 (FLILFGILTLTAVVVAIVAVF) form a helical membrane-spanning segment.

It belongs to the varicellovirus ORF0 protein family. As to quaternary structure, interacts with host ITCH; this interaction probably mediates ITCH degradation.

Its subcellular location is the host Golgi apparatus membrane. The protein is Membrane protein 0 of Homo sapiens (Human).